The primary structure comprises 332 residues: Mediator of RNA polymerase II transcription subunit 3 (332 aa).

Disordered regions lie at residues 125 to 206 (EPVR…PGAT) and 221 to 242 (SPLN…TTPS). Positions 132–143 (SPSYRRPSNRSS) are enriched in low complexity. Positions 144–153 (ADTPSSNAPT) are enriched in polar residues. Low complexity-rich tracts occupy residues 155–166 (SAAVVSGAALVA) and 184–200 (PSVS…SGPA).

This sequence belongs to the Mediator complex subunit 3 family. As to quaternary structure, component of the Mediator complex.

The protein localises to the nucleus. Its function is as follows. Component of the Mediator complex, a coactivator involved in regulated gene transcription of nearly all RNA polymerase II-dependent genes. Mediator functions as a bridge to convey information from gene-specific regulatory proteins to the basal RNA polymerase II transcription machinery. Mediator is recruited to promoters by direct interactions with regulatory proteins and serves as a scaffold for the assembly of a functional preinitiation complex with RNA polymerase II and the general transcription factors. The polypeptide is Mediator of RNA polymerase II transcription subunit 3 (PGD1) (Eremothecium gossypii (strain ATCC 10895 / CBS 109.51 / FGSC 9923 / NRRL Y-1056) (Yeast)).